We begin with the raw amino-acid sequence, 399 residues long: Chaperone protein DnaJ 1 (399 aa).

The J domain maps to 10–75 (DYYKVLGVPK…KKRKEYDEAR (66 aa)). The segment at 166-244 (GATVPLRMSS…CKGSGRAKSS (79 aa)) adopts a CR-type zinc-finger fold. Zn(2+) contacts are provided by cysteine 179, cysteine 182, cysteine 195, cysteine 198, cysteine 218, cysteine 221, cysteine 232, and cysteine 235. 4 CXXCXGXG motif repeats span residues 179-186 (CKACSGTG), 195-202 (CPTCVGTG), 218-225 (CPDCKGRG), and 232-239 (CEVCKGSG).

It belongs to the DnaJ family. As to quaternary structure, homodimer. It depends on Zn(2+) as a cofactor.

Its subcellular location is the cytoplasm. Participates actively in the response to hyperosmotic and heat shock by preventing the aggregation of stress-denatured proteins and by disaggregating proteins, also in an autonomous, DnaK-independent fashion. Unfolded proteins bind initially to DnaJ; upon interaction with the DnaJ-bound protein, DnaK hydrolyzes its bound ATP, resulting in the formation of a stable complex. GrpE releases ADP from DnaK; ATP binding to DnaK triggers the release of the substrate protein, thus completing the reaction cycle. Several rounds of ATP-dependent interactions between DnaJ, DnaK and GrpE are required for fully efficient folding. Also involved, together with DnaK and GrpE, in the DNA replication of plasmids through activation of initiation proteins. The polypeptide is Chaperone protein DnaJ 1 (Streptomyces coelicolor (strain ATCC BAA-471 / A3(2) / M145)).